Reading from the N-terminus, the 328-residue chain is PLASTID TRANSCRIPTIONALLY ACTIVE protein 6, chloroplastic (328 aa).

The segment covering 1-14 (MASSAASPSLSLLS) has biased composition (low complexity). Positions 1–21 (MASSAASPSLSLLSFTSKPPY) are disordered. A chloroplast-targeting transit peptide spans 1 to 59 (MASSAASPSLSLLSFTSKPPYPSGSQRLFASFRTDGLFAPLTLKSRRGRGIVVKVDDVD). A Nuclear localization signal motif is present at residues 267 to 275 (RKRDRKDDL). The RNA binding domain motif lies at 301–319 (EREEWTKTREDMEKHLRKL).

As to quaternary structure, subunit of the plastid-encoded RNA polymerase (PEP) complex. Component of a large nuclear subcomplex that may include other PEP subunits (e.g. PTAC12/HMR/PAP5, PTAC14/PAP7 and PTAC7/PAP12). Binds directly to PTAC12/HMR/PAP5 in the nucleus. Interacts with MTERF5. As to expression, mostly expressed in rosette leaves, stems and flowers, and, to a lower extent, in roots and cauline leaves.

It localises to the plastid. It is found in the chloroplast. Its subcellular location is the chloroplast thylakoid. The protein resides in the nucleus. The protein localises to the nucleoplasm. Functionally, essential protein involved in plastid gene expression and in chloroplast biogenesis. Links photomorphogenesis and chloroplast biogenesis through its dual localization; required for the formation of late photobodies in the nucleus, as well as for phytochrome B-mediated signaling cascade and subsequent reshaping of the plastid-encoded RNA polymerase (PEP) activity. Binds RNA via specific recognition motifs of viral origin. Recruited by MTERF5 to the transcriptionally paused region of psbEFLJ. Promotes leaf greening. The protein is PLASTID TRANSCRIPTIONALLY ACTIVE protein 6, chloroplastic of Arabidopsis thaliana (Mouse-ear cress).